Consider the following 1350-residue polypeptide: Nicotinate hydroxylase hnxS (1350 aa).

Residues C49, C54, C89, C92, C133, and C135 each contribute to the [2Fe-2S] cluster site. The interval 164 to 193 (LVGTEEETESDMGAHSGSGDTGSRSSGSCG) is disordered. The span at 180–192 (GSGDTGSRSSGSC) shows a compositional bias: low complexity. Residues 256–445 (YGDAEQAWVK…TKIAVPMPSK (190 aa)) enclose the FAD-binding PCMH-type domain. Residues 284 to 291 (LVTGASEV), 379 to 383 (CLAGN), D392, and K455 each bind FAD. Mo-molybdopterin-binding residues include Q793 and F824. Substrate contacts are provided by E828 and R906. Positions 938 and 1107 each coordinate Mo-molybdopterin. The Proton acceptor role is filled by E1281.

The protein belongs to the xanthine dehydrogenase family. Requires [2Fe-2S] cluster as cofactor. FAD serves as cofactor. It depends on Mo-molybdopterin as a cofactor.

With respect to regulation, allopurinol inhibits catalytic activity in a linear fashion. Its function is as follows. Nicotinate hydroxylase, part of the hnx cluster involved in the purine degradation. The nicotinate hydroxylase hnxS accepts nicotinate as a substrate and catalyzes the first step of nicotinate catabolism. HnxS also accepts hypoxanthine, but not xanthine, as a substrate. The major facilitator-type transporters hxnP and hxnZ are probably involved in the uptake of nicotinate-derived metabolites, and the oxidoreductases hxnT and hxnY in the further metabolism of 6-OH nicotinic acid. The protein is Nicotinate hydroxylase hnxS of Emericella nidulans (strain FGSC A4 / ATCC 38163 / CBS 112.46 / NRRL 194 / M139) (Aspergillus nidulans).